The sequence spans 620 residues: MYND-type zinc finger protein MUB1 (620 aa).

The segment at 514 to 555 (NFSCGKWEDFPRQFAKCRRCKRTKYCSRKCQLKAWGYHRYWC) adopts an MYND-type; degenerate zinc-finger fold. Zn(2+) is bound by residues C530, C533, H551, and C555. Over residues 563-606 (MRSTNTTTGVNTPNEPSSLNATATTAADVSNSTSTFTPNISTTV) the composition is skewed to polar residues. The segment at 563–620 (MRSTNTTTGVNTPNEPSSLNATATTAADVSNSTSTFTPNISTTVPDEISNRDENSIPE) is disordered. Residues 610–620 (ISNRDENSIPE) are compositionally biased toward basic and acidic residues.

The protein belongs to the MUB1/samB family. In terms of assembly, interacts with UBR2 and RPN4.

It is found in the cytoplasm. In terms of biological role, involved in the determination of the onset of polarized growth. Required for the ubiquitin-dependent degradation of RPN4. Cooperates with UBR2 to transfer ubiquitin from RAD6 to RPN4. This chain is MYND-type zinc finger protein MUB1 (MUB1), found in Saccharomyces cerevisiae (strain ATCC 204508 / S288c) (Baker's yeast).